Reading from the N-terminus, the 542-residue chain is DNA-binding protein modulo (542 aa).

The tract at residues 1 to 166 is disordered; it reads MAQKKAVTVK…RGIPKVKVGK (166 aa). Phosphoserine occurs at positions 42 and 44. Residues 59-114 are compositionally biased toward acidic residues; sequence SEEDESDVEEQNDEQPGDDSDFETEEAAGLIDDEAEEDEEYNSDDEEDDDDDELEP. Residues Ser120, Ser129, and Ser142 each carry the phosphoserine modification. A compositionally biased stretch (acidic residues) spans 123–135; sequence ADEVDESDDDEEA. Over residues 136-158 the composition is skewed to basic and acidic residues; the sequence is PVEKPVSKKSEKANSEKSEENRG. 4 consecutive RRM domains span residues 175 to 251, 258 to 331, 340 to 429, and 420 to 489; these read QIVF…QPRN, RTVV…RISQ, LTLV…NLTS, and RAIL…PNSL. Residue Ser304 is modified to Phosphoserine. Ser330 is modified (phosphoserine; by PKA). At Ser443 the chain carries Phosphoserine. The tract at residues 505–542 is disordered; it reads RAPRKFQKDTKPNFGKKPFNKRPAQENGGKSFVKRARF.

The N-terminus is blocked.

It localises to the nucleus. In terms of biological role, its capacity to bind DNA and protein(s), and its differential expression during development suggest a role in the regulation of gene expression during Drosophila development. It could, in interaction with other factors, be required for the translation of instructions provided by pattern forming genes and controls, via chromatin changes, the activity of genes critical for the process of morphogenesis of several embryonic territories. The chain is DNA-binding protein modulo (mod) from Drosophila melanogaster (Fruit fly).